Reading from the N-terminus, the 411-residue chain is LL-diaminopimelate aminotransferase (411 aa).

Substrate contacts are provided by Y15 and G42. Residues Y72, 108–109 (SK), Y132, N187, Y218, and 246–248 (SFS) each bind pyridoxal 5'-phosphate. Residues K109, Y132, and N187 each coordinate substrate. K249 carries the post-translational modification N6-(pyridoxal phosphate)lysine. The pyridoxal 5'-phosphate site is built by R257 and N292. Substrate contacts are provided by N292 and R388.

This sequence belongs to the class-I pyridoxal-phosphate-dependent aminotransferase family. LL-diaminopimelate aminotransferase subfamily. In terms of assembly, homodimer. The cofactor is pyridoxal 5'-phosphate.

It catalyses the reaction (2S,6S)-2,6-diaminopimelate + 2-oxoglutarate = (S)-2,3,4,5-tetrahydrodipicolinate + L-glutamate + H2O + H(+). It participates in amino-acid biosynthesis; L-lysine biosynthesis via DAP pathway; LL-2,6-diaminopimelate from (S)-tetrahydrodipicolinate (aminotransferase route): step 1/1. In terms of biological role, involved in the synthesis of meso-diaminopimelate (m-DAP or DL-DAP), required for both lysine and peptidoglycan biosynthesis. Catalyzes the direct conversion of tetrahydrodipicolinate to LL-diaminopimelate. The protein is LL-diaminopimelate aminotransferase of Synechococcus elongatus (strain ATCC 33912 / PCC 7942 / FACHB-805) (Anacystis nidulans R2).